The chain runs to 678 residues: MPSATPEIKQRVDQLRSQLQKASYAYYVLDNPIMEDVVYDQLYRELQNIETQYPELITPDSPTQRVGDKLSEQFISVNHNIPLYSLENAFNLQEFARWQERWQRLTPDVTQFEYVCELKIDGSAIALTYENGLLVRGVTRGDGIVGEEITPNIKTIRSIPLKLALDNPPVRIEVRGEAFLPIEEFERINQEKQTAGESLFANPRNAAAGTLRQLDPRIVDRRRLQFFAYTLYVIDSPSTPTTQWESLEDLQQMGFLVNPNRKLCQSEAEVDQYYQLWDTERHNLPYMTDGVVVKLNDYQLQQQLGFTQKFPRWAIALKYPAEEAPTQVKNITVNVGRTGAVTPMAIMEPVQLAGTTVQKATLHNSDRVAQLDIRVGDTVIIRKAGEIIPEVVRVIEELRPPNTQPYQMPTQCPECHSTLVRPKGEAVTRCVNSSCPAILRGSLVHWCSRDALDIRGLGEKVVILLIDNGLVHSIADLYHLKVEQIASLERMGTKSANNLINAINKSKQQPWSRVLYGLGIRYVGSVTAKLLSDNFKSVEQLSQASFTSLESVYGIGAEIAQSVYDWFKIEANQTLIKNLQQAELQFETLSETPKYPPISSTPLAGKTVVITGTLPSLKRNEAQELIEKAGGKVTNSVSSKTDYLLVGEDAGSKLTKAQQLGISQLSEEQLLKMINPQE.

Residues 36–40 (DVVYD), 85–86 (SL), and glutamate 117 contribute to the NAD(+) site. Lysine 119 acts as the N6-AMP-lysine intermediate in catalysis. The NAD(+) site is built by arginine 140, glutamate 177, lysine 294, and lysine 318. Zn(2+)-binding residues include cysteine 412, cysteine 415, cysteine 430, and cysteine 435. Residues 598–678 (ISSTPLAGKT…QLLKMINPQE (81 aa)) form the BRCT domain.

This sequence belongs to the NAD-dependent DNA ligase family. LigA subfamily. Mg(2+) serves as cofactor. The cofactor is Mn(2+).

The catalysed reaction is NAD(+) + (deoxyribonucleotide)n-3'-hydroxyl + 5'-phospho-(deoxyribonucleotide)m = (deoxyribonucleotide)n+m + AMP + beta-nicotinamide D-nucleotide.. Its function is as follows. DNA ligase that catalyzes the formation of phosphodiester linkages between 5'-phosphoryl and 3'-hydroxyl groups in double-stranded DNA using NAD as a coenzyme and as the energy source for the reaction. It is essential for DNA replication and repair of damaged DNA. The sequence is that of DNA ligase from Gloeothece citriformis (strain PCC 7424) (Cyanothece sp. (strain PCC 7424)).